Here is a 361-residue protein sequence, read N- to C-terminus: Dynein axonemal assembly factor 8 (361 aa).

Disordered regions lie at residues 65–191 (DPAG…ERRK) and 309–334 (AQPG…RRPL). Polar residues predominate over residues 136-157 (TLNTSASQSPRQGPQGEATRSP). Phosphoserine is present on residues Ser142 and Ser144. Positions 321 to 334 (GSSSSSGHLGRRPL) are enriched in low complexity.

Its subcellular location is the dynein axonemal particle. It is found in the cytoplasm. In cyliated cells, dynein axonemal particle-specific protein required for deployment of ODA to the axoneme. Interacts with outer dynein arm (ODA) subunits. The sequence is that of Dynein axonemal assembly factor 8 (DNAAF8) from Bos taurus (Bovine).